The sequence spans 144 residues: MFFGTYTPKLDDKGRLTLPAKFRDALAGGLMVTKSQDHSLAVHPRAEFEEMIAEISAKAKRGNPQARAYLRNLAASTDEQYPDAQGRITLSPEHRRYANLTKDCVVTGSIDFLEIWDAQAWQEYQELHEENFSAASDEALGDIL.

SpoVT-AbrB domains are found at residues 5–47 (TYTP…PRAE) and 77–120 (TDEQ…DAQA).

The protein belongs to the MraZ family. In terms of assembly, forms oligomers.

The protein resides in the cytoplasm. It localises to the nucleoid. The chain is Transcriptional regulator MraZ from Mycolicibacterium gilvum (strain PYR-GCK) (Mycobacterium gilvum (strain PYR-GCK)).